The chain runs to 186 residues: Ribonuclease M5 (186 aa).

Positions Ser-6 to Pro-89 constitute a Toprim domain. Mg(2+)-binding residues include Glu-12, Asp-58, and Asp-60.

This sequence belongs to the ribonuclease M5 family. Mg(2+) is required as a cofactor.

The protein resides in the cytoplasm. It catalyses the reaction Endonucleolytic cleavage of RNA, removing 21 and 42 nucleotides, respectively, from the 5'- and 3'-termini of a 5S-rRNA precursor.. In terms of biological role, required for correct processing of both the 5' and 3' ends of 5S rRNA precursor. Cleaves both sides of a double-stranded region yielding mature 5S rRNA in one step. In Streptococcus pneumoniae (strain ATCC BAA-255 / R6), this protein is Ribonuclease M5.